Consider the following 808-residue polypeptide: Putative dimethyl sulfoxide reductase chain YnfE (808 aa).

Residues 1 to 43 (MSKNERMVGISRRTLVKSTAIGSLALAAGGFSLPFTLRNAAAA) constitute a signal peptide (tat-type signal). One can recognise a 4Fe-4S Mo/W bis-MGD-type domain in the interval 49–110 (EKVVWGACSV…SIRRRINHPD (62 aa)). [4Fe-4S] cluster contacts are provided by C56, C60, C64, and C96. S196 provides a ligand contact to Mo-bis(molybdopterin guanine dinucleotide).

The protein belongs to the prokaryotic molybdopterin-containing oxidoreductase family. Requires [4Fe-4S] cluster as cofactor. The cofactor is Mo-bis(molybdopterin guanine dinucleotide). In terms of processing, exported by the Tat system. The position of the signal peptide cleavage has not been experimentally proven.

The protein resides in the cell membrane. Functionally, terminal reductase during anaerobic growth on various sulfoxide and N-oxide compounds. The polypeptide is Putative dimethyl sulfoxide reductase chain YnfE (ynfE) (Escherichia coli (strain K12)).